The chain runs to 152 residues: Nucleoside diphosphate kinase B (152 aa).

An interaction with AKAP13 region spans residues 1 to 66 (MANLERTFIA…DRPFFPGLVK (66 aa)). ATP contacts are provided by Lys-12, Phe-60, Arg-88, Thr-94, Arg-105, and Asn-115. His-118 acts as the Pros-phosphohistidine intermediate in catalysis.

This sequence belongs to the NDK family. In terms of assembly, hexamer of two different chains: An and B (A6, A5B, A4B2, A3B3, A2B4, AB5, B6). Interacts with CAPN8. Interacts with AKAP13. Interacts with ITGB1BP1 (via C-terminal domain region). Interacts with BCL2L10. Requires Mg(2+) as cofactor. Ubiquitously expressed.

The protein localises to the cytoplasm. The protein resides in the cell projection. Its subcellular location is the lamellipodium. It is found in the ruffle. It localises to the perinuclear region. The protein localises to the nucleus. It carries out the reaction a 2'-deoxyribonucleoside 5'-diphosphate + ATP = a 2'-deoxyribonucleoside 5'-triphosphate + ADP. It catalyses the reaction a ribonucleoside 5'-diphosphate + ATP = a ribonucleoside 5'-triphosphate + ADP. The enzyme catalyses ATP + protein L-histidine = ADP + protein N-phospho-L-histidine.. Functionally, major role in the synthesis of nucleoside triphosphates other than ATP. The ATP gamma phosphate is transferred to the NDP beta phosphate via a ping-pong mechanism, using a phosphorylated active-site intermediate. Negatively regulates Rho activity by interacting with AKAP13/LBC. Acts as a transcriptional activator of the MYC gene; binds DNA non-specifically. Binds to both single-stranded guanine- and cytosine-rich strands within the nuclease hypersensitive element (NHE) III(1) region of the MYC gene promoter. Does not bind to duplex NHE III(1). Has G-quadruplex (G4) DNA-binding activity, which is independent of its nucleotide-binding and kinase activity. Binds both folded and unfolded G4 with similar low nanomolar affinities. Stabilizes folded G4s regardless of whether they are prefolded or not. Exhibits histidine protein kinase activity. This is Nucleoside diphosphate kinase B (NME2) from Homo sapiens (Human).